The chain runs to 55 residues: Neurotoxin X-29S (55 aa).

The first 23 residues, 1 to 23 (MKIFFAVLVILVLFSMLIWTAYG), serve as a signal peptide directing secretion. Disulfide bonds link cysteine 30-cysteine 45, cysteine 36-cysteine 50, and cysteine 39-cysteine 53.

As to expression, expressed by the venom gland.

It is found in the secreted. The chain is Neurotoxin X-29S from Olivierus martensii (Manchurian scorpion).